A 364-amino-acid chain; its full sequence is Chorismate synthase (364 aa).

Arg-47 and Arg-53 together coordinate NADP(+). FMN is bound by residues 124–126, Gly-286, 301–305, and Arg-327; these read RSS and KPTAT.

This sequence belongs to the chorismate synthase family. As to quaternary structure, homotetramer. It depends on FMNH2 as a cofactor.

The catalysed reaction is 5-O-(1-carboxyvinyl)-3-phosphoshikimate = chorismate + phosphate. Its pathway is metabolic intermediate biosynthesis; chorismate biosynthesis; chorismate from D-erythrose 4-phosphate and phosphoenolpyruvate: step 7/7. Its function is as follows. Catalyzes the anti-1,4-elimination of the C-3 phosphate and the C-6 proR hydrogen from 5-enolpyruvylshikimate-3-phosphate (EPSP) to yield chorismate, which is the branch point compound that serves as the starting substrate for the three terminal pathways of aromatic amino acid biosynthesis. This reaction introduces a second double bond into the aromatic ring system. The chain is Chorismate synthase from Acaryochloris marina (strain MBIC 11017).